The sequence spans 251 residues: CDP-diacylglycerol pyrophosphatase (251 aa).

Residues 4 to 24 (AGLLFLVMIVIAVVAAGIGYW) traverse the membrane as a helical segment.

The protein belongs to the Cdh family.

Its subcellular location is the cell inner membrane. It catalyses the reaction a CDP-1,2-diacyl-sn-glycerol + H2O = a 1,2-diacyl-sn-glycero-3-phosphate + CMP + 2 H(+). The protein operates within phospholipid metabolism; CDP-diacylglycerol degradation; phosphatidate from CDP-diacylglycerol: step 1/1. In Escherichia coli O127:H6 (strain E2348/69 / EPEC), this protein is CDP-diacylglycerol pyrophosphatase.